Reading from the N-terminus, the 183-residue chain is Bifunctional protein PyrR (183 aa).

The PRPP-binding signature appears at 100-112 (VILVDDVLYTGRT).

The protein belongs to the purine/pyrimidine phosphoribosyltransferase family. PyrR subfamily.

The catalysed reaction is UMP + diphosphate = 5-phospho-alpha-D-ribose 1-diphosphate + uracil. In terms of biological role, regulates the transcription of the pyrimidine nucleotide (pyr) operon in response to exogenous pyrimidines. Functionally, also displays a weak uracil phosphoribosyltransferase activity which is not physiologically significant. The sequence is that of Bifunctional protein PyrR from Deinococcus deserti (strain DSM 17065 / CIP 109153 / LMG 22923 / VCD115).